Here is a 292-residue protein sequence, read N- to C-terminus: Bifunctional protein FolD 2 (292 aa).

NADP(+) is bound by residues 166 to 168 (GHS) and isoleucine 232.

The protein belongs to the tetrahydrofolate dehydrogenase/cyclohydrolase family. Homodimer.

It carries out the reaction (6R)-5,10-methylene-5,6,7,8-tetrahydrofolate + NADP(+) = (6R)-5,10-methenyltetrahydrofolate + NADPH. The enzyme catalyses (6R)-5,10-methenyltetrahydrofolate + H2O = (6R)-10-formyltetrahydrofolate + H(+). Its pathway is one-carbon metabolism; tetrahydrofolate interconversion. In terms of biological role, catalyzes the oxidation of 5,10-methylenetetrahydrofolate to 5,10-methenyltetrahydrofolate and then the hydrolysis of 5,10-methenyltetrahydrofolate to 10-formyltetrahydrofolate. In Ruegeria pomeroyi (strain ATCC 700808 / DSM 15171 / DSS-3) (Silicibacter pomeroyi), this protein is Bifunctional protein FolD 2.